Consider the following 391-residue polypeptide: MSLNPKDVVIVDAVRTPMGKSRNGQFRHVRAEKLSAQLIQALMARNPNWDIQLTEDVIWGCVNQTKEQGMNIARNISMLAGLPRTSAAQTVNRLCGSSMQALHSASQSIMTGNGDVFVIGGVEHMGHVAMDHGIDLNPEMSKVTAKASNMMGLTAEMLGKMHGITREQQDAFGVRSHKLAWEATQQGRWDNEIVPIEGHDQNGHKVLCEIDEVIRPGASIEDMQKLRPVFDPANGTVTAGTSSALSDGASAMLVMSAERAQALGLKPRAKIRSMAVAGCDAAIMGYGPVPATQKALARAGLTIDDIDYVELNEAFAAQSLPVAKDLKLLDKMEEKVNLNGGAIALGHPLGCSGARITGTLLNVMEWKDGQIGLATMCIGLGQGIATIIERV.

The Acyl-thioester intermediate role is filled by Cys95. Catalysis depends on proton acceptor residues His347 and Cys377.

Belongs to the thiolase-like superfamily. Thiolase family. As to quaternary structure, heterotetramer of two alpha chains (FadB) and two beta chains (FadA).

It localises to the cytoplasm. The enzyme catalyses an acyl-CoA + acetyl-CoA = a 3-oxoacyl-CoA + CoA. It functions in the pathway lipid metabolism; fatty acid beta-oxidation. Catalyzes the final step of fatty acid oxidation in which acetyl-CoA is released and the CoA ester of a fatty acid two carbons shorter is formed. The chain is 3-ketoacyl-CoA thiolase from Alcanivorax borkumensis (strain ATCC 700651 / DSM 11573 / NCIMB 13689 / SK2).